A 519-amino-acid polypeptide reads, in one-letter code: Seed lectin (519 aa).

2 cysteine pairs are disulfide-bonded: cysteine 249/cysteine 258 and cysteine 274/cysteine 293. Ricin B-type lectin domains are found at residues 261–387 (ETRT…WRVG) and 390–518 (VQPI…WVLF). The 1-alpha repeat unit spans residues 271–311 (DALCVDVAGALTSDGSRLILYPCGQQVNQKWTFHSDGTVRS). Residues 276–279 (DVAG) and 296–298 (QVN) contribute to the a carbohydrate site. A 1-beta repeat occupies 312-352 (LGKCLATNNSKFGNLVVIYDCSKLAAEDISWDVSVGGTIMN). Cysteine 315 and cysteine 332 are joined by a disulfide. Residues 356-388 (EDLALTSNKATRSTNLTMEVNTYSASQGWRVGN) form a 1-gamma repeat. Asparagine 370 is a glycosylation site (N-linked (GlcNAc...) asparagine). A 2-alpha repeat occupies 401 to 438 (DDMCLEATDGNTNMWLEECVPNQREQSWALYSDGTIRV). Intrachain disulfides connect cysteine 404–cysteine 419 and cysteine 445–cysteine 464. Residues 442–482 (RELCVTASSSTYDNWKVITILNCDGSNNQRWVFLADGSIST) form a 2-beta repeat. Residues aspartate 454, 491–494 (DVAR), 505–508 (HRPH), and asparagine 512 contribute to the a carbohydrate site. The 2-gamma repeat unit spans residues 486–513 (QRLAMDVARSDVDLKKIILHRPHGDLNQ).

The protein in the N-terminal section; belongs to the ribosome-inactivating protein family. Type 2 RIP subfamily. In terms of assembly, heterotrimer consisting of Aalpha, Abeta and B chains with Abeta and B being disulfide-linked.

Functionally, seed lectin similar to type 2 ribosome-inactivating proteins. The Aalpha and Abeta chains constitute the rRNA glycosidase domain and the B chain the carbohydrate-binding lectin domain. Is predicted to have no glycosidase activity and, hence, to be non-toxic, due to small changes in both the nucleotide binding and carbohydrate binding capabilities. Binds galactose and derivatives with a preference for the beta-anomeric forms. Binds prophyrins. Has hemagglutinating activity towards rabbit and human erythrocytes. In Trichosanthes anguina (Snake gourd), this protein is Seed lectin.